The sequence spans 1208 residues: Urease accessory protein 2 (1208 aa).

Coiled coils occupy residues 187–362 (RDKI…EKAA) and 400–469 (IKAL…MHEQ). Residues 523–633 (DGVFGPLYDL…ICEDLQTAAH (111 aa)) form the SMC hinge domain. Coiled coils occupy residues 688 to 771 (HIEV…YEEE) and 817 to 903 (NRLE…VQTQ). A disordered region spans residues 748 to 773 (ESSLEEAEGASRDAKAKRASYEEELR). Residues 756–773 (GASRDAKAKRASYEEELR) show a composition bias toward basic and acidic residues.

The protein belongs to the SMC family. SMC3 subfamily. Component of cohesin complexes.

The protein localises to the nucleus. Its function is as follows. Central component of cohesin, a complex required for chromosome cohesion during the cell cycle. The cohesin complex may form a large proteinaceous ring within which sister chromatids can be trapped. At anaphase, the complex is cleaved and dissociates from chromatin, allowing sister chromatids to segregate. Cohesion is coupled to DNA replication and is involved in DNA repair. The cohesin complex also plays an important role in spindle pole assembly during mitosis and in chromosomes movement. Is unrelated to urease function in C.neoformans. In Cryptococcus neoformans var. grubii serotype A (strain H99 / ATCC 208821 / CBS 10515 / FGSC 9487) (Filobasidiella neoformans var. grubii), this protein is Urease accessory protein 2.